A 514-amino-acid chain; its full sequence is Sugar transport protein 10 (514 aa).

Over 1–18 (MAGGAFVSEGGGGGRSYE) the chain is Cytoplasmic. 10 helical membrane-spanning segments follow: residues 19-39 (GGVTAFVIMTCIVAAMGGLLF), 86-106 (LFTSSLYLAALVASFMASVIT), 113-133 (VSMFIGGLAFLIGALFNAFAV), 135-155 (VSMLIIGRLLLGVGVGFANQS), 170-190 (GALNIGFQMAITIGILVANLI), 204-224 (VSLGLAAVPAVVMVIGSFILP), 285-305 (LIFCSAIPFFQQITGINVIMF), 320-340 (AALMSAVITGVVNMLSTFVSI), 350-370 (LLFLEGGIQMFICQLLVGSFI), and 389-409 (WILAFICVYVAGFAWSWGPLG). Cysteines 77 and 449 form a disulfide. Gln177 lines the beta-D-glucose pocket. Residues Gln295, Gln296, Asn301, and Asn332 each coordinate beta-D-glucose. Trp410 is a binding site for beta-D-glucose. A run of 2 helical transmembrane segments spans residues 428-448 (INVSVNMFFTFLIGQFFLTML) and 453-473 (FGLFYFFASMVAIMTVFIYFL). The Cytoplasmic segment spans residues 474–514 (LPETKGVPIEEMGRVWKQHWFWKKYIPEDAIIGGHDDNNTN).

This sequence belongs to the major facilitator superfamily. Sugar transporter (TC 2.A.1.1) family. Expressed in primordia of lateral roots, pollinated stigmata, and pollen tubes.

The protein resides in the membrane. The enzyme catalyses D-glucose(out) + H(+)(out) = D-glucose(in) + H(+)(in). It catalyses the reaction D-mannose(out) + H(+)(out) = D-mannose(in) + H(+)(in). The catalysed reaction is D-galactose(in) + H(+)(in) = D-galactose(out) + H(+)(out). In terms of biological role, hexose-H(+) symporter that catalyzes the high-affinity uptake of glucose, galactose and mannose. Proton-coupled symporter responsible for the uptake of glucose from the apoplast into the cells. This chain is Sugar transport protein 10, found in Arabidopsis thaliana (Mouse-ear cress).